We begin with the raw amino-acid sequence, 430 residues long: tRNA(Ile)-lysidine synthase (430 aa).

21 to 26 (SGGLDS) provides a ligand contact to ATP.

The protein belongs to the tRNA(Ile)-lysidine synthase family.

The protein localises to the cytoplasm. It catalyses the reaction cytidine(34) in tRNA(Ile2) + L-lysine + ATP = lysidine(34) in tRNA(Ile2) + AMP + diphosphate + H(+). Ligates lysine onto the cytidine present at position 34 of the AUA codon-specific tRNA(Ile) that contains the anticodon CAU, in an ATP-dependent manner. Cytidine is converted to lysidine, thus changing the amino acid specificity of the tRNA from methionine to isoleucine. The protein is tRNA(Ile)-lysidine synthase of Salmonella schwarzengrund (strain CVM19633).